Reading from the N-terminus, the 914-residue chain is MFGTIIRHVVGSRNDRLIKKARAIVAQVNALEDRFKAMDDATLAAQTAIFRERLARGEPLDALLPEAFAVVREVSRRVMGMRQYDVQIIGGFMLHEGKIAEMRTGEGKTLVATLPAYLNALQGKGVHVVTVNDYLASRDAEWVGKIHRFLGLSVGTIISDLSSEERRAAYAADITYGTNNEFGFDYLRDNMAFSPADRVQRGLHYAIIDEVDSILIDEARTPLIISGPTEENTDLYYRVDKLVGSFVVDEDYTVDEKARQVMLTEEGIEKAERLMAESGLLVDGDLYDLANVTLVHHLNQALRAHVIYRRETDYIVRDGEVCIVDEFTGRMMSGRRWSDGLHQAVEAKEGVAVQNENQTLASITFQNYFRMYEKLSGMTGTADTEAFELNQIYGLEVVIIPTHRPVCRTDFADLIYRTSQEKWKAIVEDIRGCQQRGQPVLVGTTSIEHNEFLSHLLKQARISHEVLNAKQHQREAEIIAQAGTPGAVTIATNMAGRGTDIVLGGNVGHQVDMVLANPDLEEEEKTRRIESLKSGWQGLHDAAIAAGGLHIIGTERHESRRIDNQLRGRSGRQGDPGTTRFYLSLDDPLMRIFGSDRLSGLMQKLGMKEGEAIEHPWVTKSIENAQRKVESRNFDIRKQLLEYDDVANEQRRIIYQQRNAFMDADDVSAEIRALRDDVLDAVLAATAPEGVMEERWDLPGLEAALDRIFGLQVPVGQWLEQDKGLTHAALRERIMEMVLSAYAAKESLMGSEMTRHFEKSILLQVLDSQWKDHLASMDHLREGIHLRGYAQKNPKQEYKRESLIMFNAMLDQLREEVVSTLSRLHVSPAPAEPLDWDAIARAAQPRHLQFSHPDFAAAAAPLVEDAGLALTGLGVIGEQEAGHSPAISDDKVGRNQPCPCGSGKKYKHCHGRLQ.

Residues glutamine 87, 105-109, and aspartate 500 contribute to the ATP site; that span reads GEGKT. Zn(2+)-binding residues include cysteine 898, cysteine 900, cysteine 909, and histidine 910.

Belongs to the SecA family. Monomer and homodimer. Part of the essential Sec protein translocation apparatus which comprises SecA, SecYEG and auxiliary proteins SecDF-YajC and YidC. Zn(2+) serves as cofactor.

The protein localises to the cell inner membrane. The protein resides in the cytoplasm. It carries out the reaction ATP + H2O + cellular proteinSide 1 = ADP + phosphate + cellular proteinSide 2.. In terms of biological role, part of the Sec protein translocase complex. Interacts with the SecYEG preprotein conducting channel. Has a central role in coupling the hydrolysis of ATP to the transfer of proteins into and across the cell membrane, serving as an ATP-driven molecular motor driving the stepwise translocation of polypeptide chains across the membrane. In Acidithiobacillus ferrooxidans (strain ATCC 23270 / DSM 14882 / CIP 104768 / NCIMB 8455) (Ferrobacillus ferrooxidans (strain ATCC 23270)), this protein is Protein translocase subunit SecA.